We begin with the raw amino-acid sequence, 115 residues long: Insulin (115 aa).

A signal peptide spans 1-26; the sequence is MALSPFLAAVIPLVLLLSRAPPSADT. 3 disulfide bridges follow: Cys33-Cys101, Cys45-Cys114, and Cys100-Cys105. Positions 60–92 are cleaved as a propeptide — c peptide; that stretch reads DTGALAAFLPLAYAEDNESQDDESIGINEVLKS.

It belongs to the insulin family. Heterodimer of a B chain and an A chain linked by two disulfide bonds.

The protein resides in the secreted. In terms of biological role, insulin decreases blood glucose concentration. It increases cell permeability to monosaccharides, amino acids and fatty acids. It accelerates glycolysis, the pentose phosphate cycle, and glycogen synthesis in liver. The polypeptide is Insulin (ins) (Myxine glutinosa (Atlantic hagfish)).